The chain runs to 187 residues: MSAFFLNMKKSIITQKIIAKAFKDLMQSNAYHQISVSDIMQTAKIRRQTFYNYFQNQEELLSWIFENDFAELINDNSDYYGWQNELLLLLRYLDENQIFYQKIFVIDKNFEHFFLIQWENLLDKVIFDQEKKSDYHWSDLEKSFICRYNAAAICAITRESIIRGNSLEKLYSQIVNLLLAQIKIFES.

The 61-residue stretch at 12 to 72 folds into the HTH tetR-type domain; the sequence is IITQKIIAKA…WIFENDFAEL (61 aa). Residues 35-54 constitute a DNA-binding region (H-T-H motif); it reads SVSDIMQTAKIRRQTFYNYF.

As to quaternary structure, homodimer. Interacts with a homodimer of DhaQ.

In complex with DhaQ, upon activation by dihydroxyacetone, activates transcription of the dhaKLM operon. Binds the inverted repeat sequence 5'-GGACACATN(6)ATTTGTCC-3' located upstream of and partially overlapping with the -35 promoter sequence of the dhaKLM operon promoter. The polypeptide is HTH-type dhaKLM operon transcriptional activator DhaS (dhaS) (Lactococcus lactis subsp. lactis (strain IL1403) (Streptococcus lactis)).